A 265-amino-acid chain; its full sequence is RING finger protein 208 (265 aa).

The interval 83–106 (MPTLEGASHTPPLPRRPRKGSSEL) is disordered. A Phosphoserine modification is found at S103. Residues 147-194 (CPTCGHTYNVTQRRPRVLSCLHSVCEQCLQILYESCPKYKFISCPTCH) form an RING-type zinc finger.

The chain is RING finger protein 208 (Rnf208) from Mus musculus (Mouse).